The following is a 161-amino-acid chain: Cytochrome c-type biogenesis protein CcmE (161 aa).

At 1–8 (MNARRKKR) the chain is on the cytoplasmic side. The helical; Signal-anchor for type II membrane protein transmembrane segment at 9-29 (LALATALIGGVAAIASLLLYA) threads the bilayer. Topologically, residues 30–161 (LNSNLNLFYT…EYDSTQKTGY (132 aa)) are periplasmic. Residues H131 and Y135 each coordinate heme.

This sequence belongs to the CcmE/CycJ family.

The protein localises to the cell inner membrane. Heme chaperone required for the biogenesis of c-type cytochromes. Transiently binds heme delivered by CcmC and transfers the heme to apo-cytochromes in a process facilitated by CcmF and CcmH. The chain is Cytochrome c-type biogenesis protein CcmE from Shewanella loihica (strain ATCC BAA-1088 / PV-4).